Consider the following 303-residue polypeptide: Mycothiol acetyltransferase (303 aa).

N-acetyltransferase domains are found at residues 3–152 and 155–303; these read VTVT…VSLP and VRIR…MYRS. A 1D-myo-inositol 2-(L-cysteinylamino)-2-deoxy-alpha-D-glucopyranoside-binding site is contributed by Asp-35. Residue 79–81 coordinates acetyl-CoA; sequence LTV. 3 residues coordinate 1D-myo-inositol 2-(L-cysteinylamino)-2-deoxy-alpha-D-glucopyranoside: Glu-182, Lys-224, and Glu-237. Residues 241-243 and 248-254 each bind acetyl-CoA; these read VGV and QGSGLGR. Tyr-275 serves as a coordination point for 1D-myo-inositol 2-(L-cysteinylamino)-2-deoxy-alpha-D-glucopyranoside.

This sequence belongs to the acetyltransferase family. MshD subfamily. As to quaternary structure, monomer.

It catalyses the reaction 1D-myo-inositol 2-(L-cysteinylamino)-2-deoxy-alpha-D-glucopyranoside + acetyl-CoA = mycothiol + CoA + H(+). Catalyzes the transfer of acetyl from acetyl-CoA to desacetylmycothiol (Cys-GlcN-Ins) to form mycothiol. This chain is Mycothiol acetyltransferase, found in Kocuria rhizophila (strain ATCC 9341 / DSM 348 / NBRC 103217 / DC2201).